The chain runs to 268 residues: Thymidylate synthase (268 aa).

DUMP is bound by residues R26 and R131–R132. C151 acts as the Nucleophile in catalysis. DUMP is bound by residues R171–D174, N182, and H212–Y214. D174 provides a ligand contact to (6R)-5,10-methylene-5,6,7,8-tetrahydrofolate. S267 provides a ligand contact to (6R)-5,10-methylene-5,6,7,8-tetrahydrofolate.

It belongs to the thymidylate synthase family. Bacterial-type ThyA subfamily. Homodimer.

Its subcellular location is the cytoplasm. The catalysed reaction is dUMP + (6R)-5,10-methylene-5,6,7,8-tetrahydrofolate = 7,8-dihydrofolate + dTMP. It functions in the pathway pyrimidine metabolism; dTTP biosynthesis. Functionally, catalyzes the reductive methylation of 2'-deoxyuridine-5'-monophosphate (dUMP) to 2'-deoxythymidine-5'-monophosphate (dTMP) while utilizing 5,10-methylenetetrahydrofolate (mTHF) as the methyl donor and reductant in the reaction, yielding dihydrofolate (DHF) as a by-product. This enzymatic reaction provides an intracellular de novo source of dTMP, an essential precursor for DNA biosynthesis. This chain is Thymidylate synthase, found in Corynebacterium aurimucosum (strain ATCC 700975 / DSM 44827 / CIP 107346 / CN-1) (Corynebacterium nigricans).